Reading from the N-terminus, the 316-residue chain is Endochitinase WIN8 (316 aa).

The N-terminal stretch at 1–23 is a signal peptide; the sequence is MRFWALTVLSLLLSLLLGVSSDT. The Chitin-binding type-1 domain maps to 24 to 64; it reads AQCGSQAGNATCPNDLCCSSGGYCGLTVAYCCAGCVSQCRN. Cystine bridges form between cysteine 26-cysteine 41, cysteine 35-cysteine 47, cysteine 40-cysteine 54, cysteine 58-cysteine 62, cysteine 84-cysteine 146, cysteine 158-cysteine 168, and cysteine 266-cysteine 298. Glutamate 128 functions as the Proton donor in the catalytic mechanism.

This sequence belongs to the glycosyl hydrolase 19 family. Chitinase class I subfamily.

The catalysed reaction is Random endo-hydrolysis of N-acetyl-beta-D-glucosaminide (1-&gt;4)-beta-linkages in chitin and chitodextrins.. Defense against chitin-containing fungal pathogens. The polypeptide is Endochitinase WIN8 (WIN8) (Populus trichocarpa (Western balsam poplar)).